Reading from the N-terminus, the 379-residue chain is Mannitol-1-phosphate 5-dehydrogenase (379 aa).

3-14 lines the NAD(+) pocket; it reads ALHFGAGNIGRG.

The protein belongs to the mannitol dehydrogenase family.

The enzyme catalyses D-mannitol 1-phosphate + NAD(+) = beta-D-fructose 6-phosphate + NADH + H(+). The sequence is that of Mannitol-1-phosphate 5-dehydrogenase from Actinobacillus pleuropneumoniae serotype 3 (strain JL03).